The chain runs to 242 residues: MPNFLSNKPIPVADRLIMALDLPDVSEAKTLVERLGDAVSFYKVGLELFMSGDCFALVDWLKAKDKKVFVDLKFFDVPETVGRAVKALSRRGVDFATVHGNDAIMEAAARNKGSLGILAVTVLTSLDQGDLRDLGFQCDVQELVLSRARRALAVGCDGVVSSGLEVPLLRGEIDHELMVVSPGIRPVENRPEDDQKRVVTVDQAFRNGADYIVVGRPIRDAADPREAAQRAQAQIRDVFAAG.

Residues Asp-21, Lys-43, 71 to 80 (DLKFFDVPET), Thr-124, Arg-185, Gln-195, Gly-215, and Arg-216 each bind substrate. The active-site Proton donor is Lys-73.

This sequence belongs to the OMP decarboxylase family. Type 1 subfamily. As to quaternary structure, homodimer.

It carries out the reaction orotidine 5'-phosphate + H(+) = UMP + CO2. It functions in the pathway pyrimidine metabolism; UMP biosynthesis via de novo pathway; UMP from orotate: step 2/2. Functionally, catalyzes the decarboxylation of orotidine 5'-monophosphate (OMP) to uridine 5'-monophosphate (UMP). In Methylococcus capsulatus (strain ATCC 33009 / NCIMB 11132 / Bath), this protein is Orotidine 5'-phosphate decarboxylase.